The following is a 283-amino-acid chain: Elongation factor Ts (283 aa).

The tract at residues 80 to 83 (TDFV) is involved in Mg(2+) ion dislocation from EF-Tu.

Belongs to the EF-Ts family.

The protein localises to the cytoplasm. Its function is as follows. Associates with the EF-Tu.GDP complex and induces the exchange of GDP to GTP. It remains bound to the aminoacyl-tRNA.EF-Tu.GTP complex up to the GTP hydrolysis stage on the ribosome. The sequence is that of Elongation factor Ts from Pectobacterium carotovorum subsp. carotovorum (strain PC1).